Consider the following 285-residue polypeptide: 2,3,4,5-tetrahydropyridine-2,6-dicarboxylate N-succinyltransferase (285 aa).

R111 and D148 together coordinate substrate.

Belongs to the transferase hexapeptide repeat family. As to quaternary structure, homotrimer.

The protein resides in the cytoplasm. It catalyses the reaction (S)-2,3,4,5-tetrahydrodipicolinate + succinyl-CoA + H2O = (S)-2-succinylamino-6-oxoheptanedioate + CoA. It functions in the pathway amino-acid biosynthesis; L-lysine biosynthesis via DAP pathway; LL-2,6-diaminopimelate from (S)-tetrahydrodipicolinate (succinylase route): step 1/3. In Sinorhizobium fredii (strain NBRC 101917 / NGR234), this protein is 2,3,4,5-tetrahydropyridine-2,6-dicarboxylate N-succinyltransferase.